The chain runs to 911 residues: Protein argonaute 4B (911 aa).

Disordered regions lie at residues 1–51 and 149–171; these read MDAH…RPGL and KTAA…KRVR. In terms of domain architecture, PAZ spans 281–396; it reads PVIDFLLANQ…FPIELCSLIP (116 aa). A Piwi domain is found at 565 to 872; that stretch reads FLLCLLPERK…AAAQVGTFLK (308 aa).

This sequence belongs to the argonaute family. Ago subfamily.

In terms of biological role, probably involved in the RNA silencing pathway. May bind to short RNAs such as microRNAs (miRNAs) or short interfering RNAs (siRNAs), and represses the translation of mRNAs which are complementary to them. The protein is Protein argonaute 4B (AGO4B) of Oryza sativa subsp. japonica (Rice).